A 247-amino-acid chain; its full sequence is Ribonuclease 3 (247 aa).

Residues 21–149 (LQKLSKKIGI…LVGAIYLDQG (129 aa)) enclose the RNase III domain. Position 62 (Glu62) interacts with Mg(2+). Asp66 is an active-site residue. The Mg(2+) site is built by Asn135 and Glu138. Glu138 is a catalytic residue. The DRBM domain maps to 176 to 245 (DYKTQLQEYS…AKELYNRIRK (70 aa)).

It belongs to the ribonuclease III family. Homodimer. Mg(2+) serves as cofactor.

It is found in the cytoplasm. It carries out the reaction Endonucleolytic cleavage to 5'-phosphomonoester.. In terms of biological role, digests double-stranded RNA. Involved in the processing of primary rRNA transcript to yield the immediate precursors to the large and small rRNAs (23S and 16S). Processes some mRNAs, and tRNAs when they are encoded in the rRNA operon. Processes pre-crRNA and tracrRNA of type II CRISPR loci if present in the organism. The chain is Ribonuclease 3 from Leptospira interrogans serogroup Icterohaemorrhagiae serovar copenhageni (strain Fiocruz L1-130).